A 451-amino-acid polypeptide reads, in one-letter code: UDP-N-acetylmuramoylalanine--D-glutamate ligase (451 aa).

118–124 (GTKGKST) is a binding site for ATP.

The protein belongs to the MurCDEF family.

It localises to the cytoplasm. It carries out the reaction UDP-N-acetyl-alpha-D-muramoyl-L-alanine + D-glutamate + ATP = UDP-N-acetyl-alpha-D-muramoyl-L-alanyl-D-glutamate + ADP + phosphate + H(+). It participates in cell wall biogenesis; peptidoglycan biosynthesis. In terms of biological role, cell wall formation. Catalyzes the addition of glutamate to the nucleotide precursor UDP-N-acetylmuramoyl-L-alanine (UMA). The sequence is that of UDP-N-acetylmuramoylalanine--D-glutamate ligase from Borreliella burgdorferi (strain ZS7) (Borrelia burgdorferi).